We begin with the raw amino-acid sequence, 549 residues long: Glucoamylase, intracellular sporulation-specific (549 aa).

Tryptophan 198 contributes to the substrate binding site. The active-site Proton acceptor is aspartate 261. Residue glutamate 264 is the Proton donor of the active site.

The protein belongs to the glycosyl hydrolase 15 family.

It carries out the reaction Hydrolysis of terminal (1-&gt;4)-linked alpha-D-glucose residues successively from non-reducing ends of the chains with release of beta-D-glucose.. This is Glucoamylase, intracellular sporulation-specific (SGA1) from Saccharomyces cerevisiae (strain ATCC 204508 / S288c) (Baker's yeast).